The chain runs to 199 residues: Prolactin (199 aa).

Residues Cys-4 and Cys-11 are joined by a disulfide bond. A phosphoserine mark is found at Ser-26, Ser-34, and Ser-90. Intrachain disulfides connect Cys-58–Cys-174 and Cys-191–Cys-199.

The protein belongs to the somatotropin/prolactin family. As to quaternary structure, interacts with PRLR.

The protein localises to the secreted. In terms of biological role, prolactin acts primarily on the mammary gland by promoting lactation. The polypeptide is Prolactin (PRL) (Balaenoptera borealis (Sei whale)).